The sequence spans 112 residues: uncharacterized protein (112 aa).

Residues 89-106 (TLYVLVIVGLTILCFLLV) traverse the membrane as a helical segment.

It belongs to the IIV-6 466R family.

The protein resides in the membrane. This is an uncharacterized protein from Aedes vexans (Inland floodwater mosquito).